A 206-amino-acid chain; its full sequence is Methyltransferase-like 26 (206 aa).

This sequence belongs to the UPF0585 family.

This chain is Methyltransferase-like 26, found in Danio rerio (Zebrafish).